Consider the following 478-residue polypeptide: Protein nucleotidyltransferase YdiU (478 aa).

8 residues coordinate ATP: Gly-84, Gly-86, Arg-87, Lys-107, Asp-119, Gly-120, Arg-170, and Arg-177. The Proton acceptor role is filled by Asp-246. Residues Asn-247 and Asp-256 each contribute to the Mg(2+) site. Residue Asp-256 participates in ATP binding.

It belongs to the SELO family. Mg(2+) is required as a cofactor. The cofactor is Mn(2+).

The catalysed reaction is L-seryl-[protein] + ATP = 3-O-(5'-adenylyl)-L-seryl-[protein] + diphosphate. It carries out the reaction L-threonyl-[protein] + ATP = 3-O-(5'-adenylyl)-L-threonyl-[protein] + diphosphate. The enzyme catalyses L-tyrosyl-[protein] + ATP = O-(5'-adenylyl)-L-tyrosyl-[protein] + diphosphate. It catalyses the reaction L-histidyl-[protein] + UTP = N(tele)-(5'-uridylyl)-L-histidyl-[protein] + diphosphate. The catalysed reaction is L-seryl-[protein] + UTP = O-(5'-uridylyl)-L-seryl-[protein] + diphosphate. It carries out the reaction L-tyrosyl-[protein] + UTP = O-(5'-uridylyl)-L-tyrosyl-[protein] + diphosphate. Functionally, nucleotidyltransferase involved in the post-translational modification of proteins. It can catalyze the addition of adenosine monophosphate (AMP) or uridine monophosphate (UMP) to a protein, resulting in modifications known as AMPylation and UMPylation. In Escherichia coli O1:K1 / APEC, this protein is Protein nucleotidyltransferase YdiU.